A 307-amino-acid polypeptide reads, in one-letter code: Plasmodesmata-located protein 2 (307 aa).

Positions 1 to 23 are cleaved as a signal peptide; that stretch reads MGLSISFLSIIMMMCLLFPDLNV. Topologically, residues 24–275 are extracellular; that stretch reads VVKSATTEYT…STSTGATGKT (252 aa). Gnk2-homologous domains are found at residues 33 to 136 and 141 to 240; these read TTLI…VSGF and GMEM…YYPN. 6 disulfide bridges follow: C40–C114, C90–C99, C102–C127, C149–C218, C194–C203, and C206–C231. Positions 246-268 are enriched in low complexity; it reads SSSSSSSSSSSSSGSSNSDPSTS. Positions 246–270 are disordered; it reads SSSSSSSSSSSSSGSSNSDPSTSTG. Residues 276-296 form a helical membrane-spanning segment; it reads VAIIVGGAAGVGFLVICLLFA. Residues 276 to 296 form a necessary and sufficient for plasmodesmal targeting region; the sequence is VAIIVGGAAGVGFLVICLLFA. The Cytoplasmic portion of the chain corresponds to 297-307; the sequence is KNLMRKKHDDY.

This sequence belongs to the cysteine-rich repeat secretory protein family. Plasmodesmata-located proteins (PDLD) subfamily. In terms of assembly, (Microbial infection) Interacts with Grapevine fanleaf virus (GFLV) 2B-MP. As to expression, highly expressed in inflorescence shoot apex. Uniformly expressed within the inflorescence meristem with the exception of a boundary zone between floral primordia and the meristem where the expression is weaker (at protein level).

It is found in the cell membrane. Its subcellular location is the cell junction. It localises to the plasmodesma. Functionally, modulates cell-to-cell trafficking. The protein is Plasmodesmata-located protein 2 of Arabidopsis thaliana (Mouse-ear cress).